We begin with the raw amino-acid sequence, 126 residues long: Ribonuclease P protein component (126 aa).

This sequence belongs to the RnpA family. Consists of a catalytic RNA component (M1 or rnpB) and a protein subunit.

It catalyses the reaction Endonucleolytic cleavage of RNA, removing 5'-extranucleotides from tRNA precursor.. In terms of biological role, RNaseP catalyzes the removal of the 5'-leader sequence from pre-tRNA to produce the mature 5'-terminus. It can also cleave other RNA substrates such as 4.5S RNA. The protein component plays an auxiliary but essential role in vivo by binding to the 5'-leader sequence and broadening the substrate specificity of the ribozyme. The polypeptide is Ribonuclease P protein component (Brevibacillus brevis (strain 47 / JCM 6285 / NBRC 100599)).